Here is a 563-residue protein sequence, read N- to C-terminus: Arginine--tRNA ligase (563 aa).

Residues 134 to 144 carry the 'HIGH' region motif; it reads ANPTGLLHMGN.

The protein belongs to the class-I aminoacyl-tRNA synthetase family. Monomer.

Its subcellular location is the cytoplasm. The catalysed reaction is tRNA(Arg) + L-arginine + ATP = L-arginyl-tRNA(Arg) + AMP + diphosphate. The sequence is that of Arginine--tRNA ligase from Heliobacterium modesticaldum (strain ATCC 51547 / Ice1).